Consider the following 274-residue polypeptide: tRNA pseudouridine synthase A (274 aa).

The Nucleophile role is filled by Asp56. Tyr109 serves as a coordination point for substrate.

Belongs to the tRNA pseudouridine synthase TruA family.

The enzyme catalyses uridine(38/39/40) in tRNA = pseudouridine(38/39/40) in tRNA. In terms of biological role, formation of pseudouridine at positions 38, 39 and 40 in the anticodon stem and loop of transfer RNAs. The sequence is that of tRNA pseudouridine synthase A from Methanosphaera stadtmanae (strain ATCC 43021 / DSM 3091 / JCM 11832 / MCB-3).